Reading from the N-terminus, the 191-residue chain is Ribosomal RNA small subunit methyltransferase G (191 aa).

S-adenosyl-L-methionine is bound by residues G59, 111-112 (IE), and R124.

This sequence belongs to the methyltransferase superfamily. RNA methyltransferase RsmG family.

Its subcellular location is the cytoplasm. Specifically methylates the N7 position of a guanine in 16S rRNA. This chain is Ribosomal RNA small subunit methyltransferase G, found in Mycoplasma pneumoniae (strain ATCC 29342 / M129 / Subtype 1) (Mycoplasmoides pneumoniae).